Reading from the N-terminus, the 82-residue chain is MPKRTLQGVVVSDKQAKTVVVRVDRRFTHPIYKKTIRRSKNYHAHDENNEFKPGDVVWIEESKPISKLKRWTVVRGEQKKTA.

It belongs to the universal ribosomal protein uS17 family. In terms of assembly, part of the 30S ribosomal subunit.

One of the primary rRNA binding proteins, it binds specifically to the 5'-end of 16S ribosomal RNA. The polypeptide is Small ribosomal subunit protein uS17 (Rhodopseudomonas palustris (strain BisA53)).